The sequence spans 508 residues: Glycerol kinase (508 aa).

An ADP-binding site is contributed by threonine 14. Positions 14, 15, and 16 each coordinate ATP. Residue threonine 14 coordinates sn-glycerol 3-phosphate. Residue arginine 18 coordinates ADP. The sn-glycerol 3-phosphate site is built by arginine 84, glutamate 85, and tyrosine 136. 3 residues coordinate glycerol: arginine 84, glutamate 85, and tyrosine 136. Histidine 232 carries the post-translational modification Phosphohistidine; by HPr. Residue aspartate 246 participates in sn-glycerol 3-phosphate binding. Glycerol-binding residues include aspartate 246 and glutamine 247. Positions 268 and 311 each coordinate ADP. 4 residues coordinate ATP: threonine 268, glycine 311, glutamine 315, and glycine 412. Residues glycine 412 and asparagine 416 each coordinate ADP.

The protein belongs to the FGGY kinase family. In terms of assembly, homotetramer and homodimer (in equilibrium). Post-translationally, the phosphoenolpyruvate-dependent sugar phosphotransferase system (PTS), including enzyme I, and histidine-containing protein (HPr) are required for the phosphorylation, which leads to the activation of the enzyme.

The catalysed reaction is glycerol + ATP = sn-glycerol 3-phosphate + ADP + H(+). It participates in polyol metabolism; glycerol degradation via glycerol kinase pathway; sn-glycerol 3-phosphate from glycerol: step 1/1. With respect to regulation, activated by phosphorylation and inhibited by fructose 1,6-bisphosphate (FBP). Its function is as follows. Key enzyme in the regulation of glycerol uptake and metabolism. Catalyzes the phosphorylation of glycerol to yield sn-glycerol 3-phosphate. This chain is Glycerol kinase, found in Streptococcus pyogenes serotype M3 (strain ATCC BAA-595 / MGAS315).